The following is a 215-amino-acid chain: Cytochrome b6 (215 aa).

The chain crosses the membrane as a helical span at residues 32–52; it reads IFYCLGGITLTCFLVQVATGF. C35 contacts heme c. Residues H86 and H100 each contribute to the heme b site. The next 3 helical transmembrane spans lie at 90-110, 116-136, and 186-206; these read ASMM…TGGF, LTWV…VTGY, and LHTF…FPMI. Residues H187 and H202 each contribute to the heme b site.

This sequence belongs to the cytochrome b family. PetB subfamily. As to quaternary structure, the 4 large subunits of the cytochrome b6-f complex are cytochrome b6, subunit IV (17 kDa polypeptide, PetD), cytochrome f and the Rieske protein, while the 4 small subunits are PetG, PetL, PetM and PetN. The complex functions as a dimer. Requires heme b as cofactor. Heme c serves as cofactor.

The protein resides in the plastid. The protein localises to the chloroplast thylakoid membrane. Functionally, component of the cytochrome b6-f complex, which mediates electron transfer between photosystem II (PSII) and photosystem I (PSI), cyclic electron flow around PSI, and state transitions. This Vitis vinifera (Grape) protein is Cytochrome b6.